A 341-amino-acid polypeptide reads, in one-letter code: Cyclic GMP-AMP synthase (341 aa).

An ATP-binding site is contributed by S56. Catalysis depends on residues D71 and D73. Mg(2+) is bound at residue D73. N109 is a binding site for ATP. Residue D123 is part of the active site. Mg(2+) is bound at residue D123. Residues L192 and D238 each contribute to the ATP site.

The protein belongs to the CD-NTase family. B04 subfamily. Monomer. Mg(2+) is required as a cofactor.

The catalysed reaction is GTP + ATP = 3',3'-cGAMP + 2 diphosphate. Functionally, cyclic nucleotide synthase (second messenger synthase) of a CBASS antivirus system. CBASS (cyclic oligonucleotide-based antiphage signaling system) provides immunity against bacteriophage. The CD-NTase protein synthesizes cyclic nucleotides in response to infection; these serve as specific second messenger signals. The signals activate a diverse range of effectors, leading to bacterial cell death and thus abortive phage infection. A type II-A(GA) CBASS system. Its function is as follows. Catalyzes the synthesis of 3'3'-cyclic GMP-AMP (3'3'-cGAMP) from GTP and ATP, a second messenger in cell signal transduction. May make another product. Controls the activity of the CBASS cGAMP-activated phospholipase effector protein. In Bacteroides fragilis, this protein is Cyclic GMP-AMP synthase.